The primary structure comprises 228 residues: 2,3-bisphosphoglycerate-dependent phosphoglycerate mutase (228 aa).

Substrate is bound by residues 8–15, 21–22, R60, 87–90, K98, 114–115, and 183–184; these read RHGQSVWN, TG, ERHY, RR, and GN. Catalysis depends on H9, which acts as the Tele-phosphohistidine intermediate. E87 acts as the Proton donor/acceptor in catalysis.

This sequence belongs to the phosphoglycerate mutase family. BPG-dependent PGAM subfamily. Homodimer.

It carries out the reaction (2R)-2-phosphoglycerate = (2R)-3-phosphoglycerate. It functions in the pathway carbohydrate degradation; glycolysis; pyruvate from D-glyceraldehyde 3-phosphate: step 3/5. Catalyzes the interconversion of 2-phosphoglycerate and 3-phosphoglycerate. In Rhodospirillum centenum (strain ATCC 51521 / SW), this protein is 2,3-bisphosphoglycerate-dependent phosphoglycerate mutase.